We begin with the raw amino-acid sequence, 439 residues long: Phthalate 4,5-dioxygenase oxygenase subunit (439 aa).

A Rieske domain is found at 27 to 134; it reads WTPVCLLEEV…TREWGGFVWA (108 aa). Positions 70, 72, 89, and 92 each coordinate [2Fe-2S] cluster. Fe cation-binding residues include H181 and H186.

It belongs to the bacterial ring-hydroxylating dioxygenase alpha subunit family. As to quaternary structure, this dioxygenase system consists of two proteins: phthalate oxygenase and phthalate oxygenase reductase. It depends on [2Fe-2S] cluster as a cofactor. Fe cation serves as cofactor.

The enzyme catalyses phthalate + NADH + O2 + H(+) = cis-4,5-dihydroxycyclohexa-2,6-diene-1,2-dicarboxylate + NAD(+). It participates in xenobiotic degradation; phthalate degradation; 3,4-dihydroxybenzoate from phthalate: step 1/3. The polypeptide is Phthalate 4,5-dioxygenase oxygenase subunit (pht3) (Pseudomonas putida (Arthrobacter siderocapsulatus)).